A 493-amino-acid chain; its full sequence is Cytochrome P450 710A3 (493 aa).

Residues 5-25 (VSLFASLTPYLVSALLLFLLL) traverse the membrane as a helical segment. Residue Cys-435 participates in heme binding.

It belongs to the cytochrome P450 family. It depends on heme as a cofactor. Expressed in stems. Detected in primary root caps and immature petals.

The protein resides in the membrane. It carries out the reaction 5-dehydroepisterol + NADPH + O2 + H(+) = ergosta-5,7,22,24(28)-tetraen-3beta-ol + NADP(+) + 2 H2O. Functionally, required to form the C-22 double bond in the sterol side chain. Possesses in vitro C-22 desaturase activity toward beta-sitosterol and produces stigmasterol. This Arabidopsis thaliana (Mouse-ear cress) protein is Cytochrome P450 710A3.